Consider the following 284-residue polypeptide: RNA polymerase sigma factor RpoH (284 aa).

Residues 53-122 form a sigma-70 factor domain-2 region; the sequence is LILSHLRFVI…IHEYVLRNWR (70 aa). The Interaction with polymerase core subunit RpoC signature appears at 77 to 80; it reads DLIQ. Residues 228–280 are sigma-70 factor domain-4; the sequence is ALLRLDERSRHIIHARWLDKNKKNTLQNIANNYGISAERVRQLEKNAMKKLKL. A DNA-binding region (H-T-H motif) is located at residues 253 to 272; the sequence is LQNIANNYGISAERVRQLEK.

It belongs to the sigma-70 factor family. RpoH subfamily. As to quaternary structure, interacts with the RNA polymerase core enzyme.

The protein resides in the cytoplasm. Functionally, sigma factors are initiation factors that promote the attachment of RNA polymerase to specific initiation sites and are then released. This sigma factor is involved in regulation of expression of heat shock genes. The chain is RNA polymerase sigma factor RpoH from Buchnera aphidicola subsp. Acyrthosiphon pisum (strain APS) (Acyrthosiphon pisum symbiotic bacterium).